Reading from the N-terminus, the 336-residue chain is Dihydrolipoyl dehydrogenase (336 aa).

Residues 34-42 (EKEVVGGIC), K51, and G115 each bind FAD. A disulfide bond links C42 and C47. NAD(+) is bound by residues 180–184 (GGGVI), E203, V237, and 264–267 (SVGT). D304 and A312 together coordinate FAD.

It belongs to the class-I pyridine nucleotide-disulfide oxidoreductase family. Homodimer. FAD serves as cofactor.

It is found in the cytoplasm. It catalyses the reaction N(6)-[(R)-dihydrolipoyl]-L-lysyl-[protein] + NAD(+) = N(6)-[(R)-lipoyl]-L-lysyl-[protein] + NADH + H(+). Its function is as follows. Lipoamide dehydrogenase is a component of the alpha-ketoacid dehydrogenase complexes. The protein is Dihydrolipoyl dehydrogenase (pdhD) of Acholeplasma laidlawii.